The chain runs to 315 residues: Methionyl-tRNA formyltransferase (315 aa).

The segment at 2-189 (SESLRIIFAG…LITTLKQLAD (188 aa)) is N-terminal domain. 113-116 (SLLP) contacts (6S)-5,6,7,8-tetrahydrofolate. Residues 210-315 (KEEARIDWSL…EWFVPGNRLV (106 aa)) form a C-terminal domain region.

This sequence belongs to the Fmt family. In terms of assembly, monomer.

It carries out the reaction L-methionyl-tRNA(fMet) + (6R)-10-formyltetrahydrofolate = N-formyl-L-methionyl-tRNA(fMet) + (6S)-5,6,7,8-tetrahydrofolate + H(+). Activity is optimum in the presence of Mg(2+) and K(+). Functionally, attaches a formyl group to the free amino group of methionyl-tRNA(fMet). The formyl group appears to play a dual role in the initiator identity of N-formylmethionyl-tRNA by promoting its recognition by IF2 and preventing the misappropriation of this tRNA by the elongation apparatus. In Escherichia coli (strain K12), this protein is Methionyl-tRNA formyltransferase.